The primary structure comprises 416 residues: Diaminopimelate decarboxylase (416 aa).

K60 carries the post-translational modification N6-(pyridoxal phosphate)lysine. Pyridoxal 5'-phosphate contacts are provided by residues G240 and 274-277 (EPGR). Positions 277, 313, and 317 each coordinate substrate. Residue C343 is the Proton donor of the active site. Residues E344 and Y371 each contribute to the substrate site. Y371 provides a ligand contact to pyridoxal 5'-phosphate.

It belongs to the Orn/Lys/Arg decarboxylase class-II family. LysA subfamily. As to quaternary structure, homodimer. Pyridoxal 5'-phosphate serves as cofactor.

The enzyme catalyses meso-2,6-diaminopimelate + H(+) = L-lysine + CO2. The protein operates within amino-acid biosynthesis; L-lysine biosynthesis via DAP pathway; L-lysine from DL-2,6-diaminopimelate: step 1/1. In terms of biological role, specifically catalyzes the decarboxylation of meso-diaminopimelate (meso-DAP) to L-lysine. The polypeptide is Diaminopimelate decarboxylase (Pseudomonas fluorescens).